Consider the following 334-residue polypeptide: DNA-directed RNA polymerase subunit alpha (334 aa).

Positions 1-232 (MVREEIAVST…IDLFIPFLHA (232 aa)) are alpha N-terminal domain (alpha-NTD). The tract at residues 268-334 (GIALKCIFID…ILQKHFTIDC (67 aa)) is alpha C-terminal domain (alpha-CTD).

It belongs to the RNA polymerase alpha chain family. In plastids the minimal PEP RNA polymerase catalytic core is composed of four subunits: alpha, beta, beta', and beta''. When a (nuclear-encoded) sigma factor is associated with the core the holoenzyme is formed, which can initiate transcription.

It localises to the plastid. The protein resides in the chloroplast. The catalysed reaction is RNA(n) + a ribonucleoside 5'-triphosphate = RNA(n+1) + diphosphate. Functionally, DNA-dependent RNA polymerase catalyzes the transcription of DNA into RNA using the four ribonucleoside triphosphates as substrates. The polypeptide is DNA-directed RNA polymerase subunit alpha (Chloranthus spicatus (Chulantree)).